The chain runs to 359 residues: Peptide chain release factor 1 (359 aa).

Glutamine 235 carries the N5-methylglutamine modification. A disordered region spans residues 284-311 (KAESERSASRKNQVGSGDRSERIRTYNF).

This sequence belongs to the prokaryotic/mitochondrial release factor family. Methylated by PrmC. Methylation increases the termination efficiency of RF1.

Its subcellular location is the cytoplasm. In terms of biological role, peptide chain release factor 1 directs the termination of translation in response to the peptide chain termination codons UAG and UAA. In Bartonella quintana (strain Toulouse) (Rochalimaea quintana), this protein is Peptide chain release factor 1.